Consider the following 267-residue polypeptide: Putative hydro-lyase Arth_3576 (267 aa).

This sequence belongs to the D-glutamate cyclase family.

This Arthrobacter sp. (strain FB24) protein is Putative hydro-lyase Arth_3576.